The primary structure comprises 78 residues: Short neurotoxin 342 (78 aa).

A signal peptide spans 1–21; that stretch reads MKTLLLTLVVLTIVCLDLGYT. 4 disulfide bridges follow: Cys24–Cys43, Cys38–Cys57, Cys59–Cys70, and Cys71–Cys76.

The protein belongs to the three-finger toxin family. Short-chain subfamily. Type I alpha-neurotoxin sub-subfamily. As to expression, expressed by the venom gland.

It localises to the secreted. Functionally, binds to muscle nicotinic acetylcholine receptor (nAChR) and inhibit acetylcholine from binding to the receptor, thereby impairing neuromuscular transmission. The polypeptide is Short neurotoxin 342 (Drysdalia coronoides (White-lipped snake)).